A 501-amino-acid chain; its full sequence is Envelope glycoprotein C homolog (501 aa).

The N-terminal stretch at 1–27 (MLTPRVLRALGWTGLFFLLLSPSNVLG) is a signal peptide. Residues 28–465 (ASLSRDLETP…DATPSARGTP (438 aa)) lie on the Virion surface side of the membrane. N46 carries an N-linked (GlcNAc...) asparagine; by host glycan. Residues 53 to 86 (PLTEVPHAPSTESVSTNSESTNEHTITETTGKNA) are disordered. Over residues 62 to 72 (STESVSTNSES) the composition is skewed to low complexity. N-linked (GlcNAc...) asparagine; by host glycosylation is found at N91, N100, N120, N212, N354, N400, and N429. Residues 258–356 (PASVDVLAPP…GDMISTTNAT (99 aa)) enclose the Ig-like domain. A helical membrane pass occupies residues 466–492 (MVITVTAVLGLAVILGMGIIMTALCLY). At 493-501 (NSTRKNIRL) the chain is on the cytoplasmic side.

The protein belongs to the herpesviridae glycoprotein C family.

The protein resides in the secreted. Its subcellular location is the host cell membrane. May play an immunoevasive role in the pathogenesis of Marek's disease. It is a candidate for causing the early-stage immunosuppression that occurs after MDHV infection. The chain is Envelope glycoprotein C homolog (gC) from Gallus gallus (Chicken).